The sequence spans 126 residues: Holo-[acyl-carrier-protein] synthase (126 aa).

Mg(2+) is bound by residues Asp-8 and Glu-57.

The protein belongs to the P-Pant transferase superfamily. AcpS family. It depends on Mg(2+) as a cofactor.

The protein localises to the cytoplasm. It carries out the reaction apo-[ACP] + CoA = holo-[ACP] + adenosine 3',5'-bisphosphate + H(+). Transfers the 4'-phosphopantetheine moiety from coenzyme A to a Ser of acyl-carrier-protein. This chain is Holo-[acyl-carrier-protein] synthase, found in Trichlorobacter lovleyi (strain ATCC BAA-1151 / DSM 17278 / SZ) (Geobacter lovleyi).